We begin with the raw amino-acid sequence, 1940 residues long: Myosin-3 (1940 aa).

Residues 33–82 enclose the Myosin N-terminal SH3-like domain; that stretch reads DAKTYCFVVDSKEEYVKGKIKSSQDGKVTVETEDSRTLVVKPEDVYAMNP. One can recognise a Myosin motor domain in the interval 86 to 779; the sequence is DKIEDMAMLT…LLGTLEEMRD (694 aa). Position 130 is an N6,N6,N6-trimethyllysine (Lys130). 179-186 contacts ATP; it reads GESGAGKT. 2 actin-binding regions span residues 656 to 678 and 758 to 772; these read LNKL…IPNE and KFGH…GLLG. Positions 782 to 811 constitute an IQ domain; it reads LAKLITRTQAVCRGFLMRVEFQKMMQRRES. A coiled-coil region spans residues 841 to 1928; the sequence is LKSAETEKEM…NKLRAKTRDF (1088 aa). Residues 1260–1289 are disordered; that stretch reads ARGKNEEMQRSLSELTTQKSRLQTEAGELS. Residues 1269-1282 are compositionally biased toward polar residues; that stretch reads RSLSELTTQKSRLQ.

This sequence belongs to the TRAFAC class myosin-kinesin ATPase superfamily. Myosin family. As to quaternary structure, muscle myosin is a hexameric protein that consists of 2 heavy chain subunits (MHC), 2 alkali light chain subunits (MLC) and 2 regulatory light chain subunits (MLC-2).

The protein resides in the cytoplasm. Its subcellular location is the myofibril. Its function is as follows. Muscle contraction. The polypeptide is Myosin-3 (Myh3) (Mus musculus (Mouse)).